The sequence spans 316 residues: Putative mannose-6-phosphate isomerase YvyI (316 aa).

Zn(2+) contacts are provided by His98, Glu116, and His173. Arg193 is a catalytic residue.

The protein belongs to the mannose-6-phosphate isomerase type 1 family. Zn(2+) serves as cofactor.

The catalysed reaction is D-mannose 6-phosphate = D-fructose 6-phosphate. In Bacillus subtilis (strain 168), this protein is Putative mannose-6-phosphate isomerase YvyI (yvyI).